Reading from the N-terminus, the 287-residue chain is Octanoyl-[GcvH]:protein N-octanoyltransferase (287 aa).

The region spanning 45–253 is the BPL/LPL catalytic domain; the sequence is GESPATARSW…ELKELSGRLY (209 aa). The active-site Acyl-thioester intermediate is C150.

Belongs to the octanoyltransferase LipL family.

The catalysed reaction is N(6)-octanoyl-L-lysyl-[glycine-cleavage complex H protein] + L-lysyl-[lipoyl-carrier protein] = N(6)-octanoyl-L-lysyl-[lipoyl-carrier protein] + L-lysyl-[glycine-cleavage complex H protein]. The protein operates within protein modification; protein lipoylation via endogenous pathway; protein N(6)-(lipoyl)lysine from octanoyl-[acyl-carrier-protein]. Catalyzes the amidotransfer (transamidation) of the octanoyl moiety from octanoyl-GcvH to the lipoyl domain of the E2 subunit of lipoate-dependent enzymes. The protein is Octanoyl-[GcvH]:protein N-octanoyltransferase of Bacillus velezensis (strain DSM 23117 / BGSC 10A6 / LMG 26770 / FZB42) (Bacillus amyloliquefaciens subsp. plantarum).